Here is a 242-residue protein sequence, read N- to C-terminus: DNA repair protein RecO (242 aa).

Belongs to the RecO family. In terms of assembly, monomer.

In terms of biological role, involved in DNA repair and RecF pathway recombination. The chain is DNA repair protein RecO from Shigella flexneri.